A 459-amino-acid chain; its full sequence is ATP synthase subunit beta (459 aa).

148–155 (GGAGVGKT) provides a ligand contact to ATP.

The protein belongs to the ATPase alpha/beta chains family. F-type ATPases have 2 components, CF(1) - the catalytic core - and CF(0) - the membrane proton channel. CF(1) has five subunits: alpha(3), beta(3), gamma(1), delta(1), epsilon(1). CF(0) has three main subunits: a(1), b(2) and c(9-12). The alpha and beta chains form an alternating ring which encloses part of the gamma chain. CF(1) is attached to CF(0) by a central stalk formed by the gamma and epsilon chains, while a peripheral stalk is formed by the delta and b chains.

The protein resides in the cell inner membrane. The enzyme catalyses ATP + H2O + 4 H(+)(in) = ADP + phosphate + 5 H(+)(out). Its function is as follows. Produces ATP from ADP in the presence of a proton gradient across the membrane. The catalytic sites are hosted primarily by the beta subunits. The polypeptide is ATP synthase subunit beta (Hahella chejuensis (strain KCTC 2396)).